The following is a 148-amino-acid chain: Large ribosomal subunit protein uL11 (148 aa).

Belongs to the universal ribosomal protein uL11 family. As to quaternary structure, part of the ribosomal stalk of the 50S ribosomal subunit. Interacts with L10 and the large rRNA to form the base of the stalk. L10 forms an elongated spine to which L12 dimers bind in a sequential fashion forming a multimeric L10(L12)X complex. Post-translationally, one or more lysine residues are methylated.

Forms part of the ribosomal stalk which helps the ribosome interact with GTP-bound translation factors. This chain is Large ribosomal subunit protein uL11, found in Myxococcus xanthus (strain DK1622).